Consider the following 388-residue polypeptide: Protein TsgA homolog (388 aa).

12 helical membrane passes run 12–32, 51–71, 77–97, 102–122, 137–157, 163–183, 203–223, 246–266, 272–292, 294–314, 331–351, and 356–376; these read CISF…GIFL, TFLN…TNII, LIFG…SHNL, ISMF…TYII, LTDS…ALII, WYWV…ITIN, FSIL…LSFI, SAFW…LKFF, IITL…FYDY, LLYI…TIII, YILT…GPIV, and IFSA…LVII.

It belongs to the major facilitator superfamily. TsgA family.

The protein localises to the cell membrane. The sequence is that of Protein TsgA homolog from Buchnera aphidicola subsp. Baizongia pistaciae (strain Bp).